Consider the following 205-residue polypeptide: Venom allergen 5 (205 aa).

4 disulfides stabilise this stretch: Cys4/Cys16, Cys8/Cys104, Cys28/Cys96, and Cys171/Cys188. One can recognise an SCP domain in the interval 47-190 (VNEHNRFRQK…MQHHYLICNY (144 aa)).

Belongs to the CRISP family. Venom allergen 5-like subfamily. In terms of tissue distribution, expressed by the venom gland.

Its subcellular location is the secreted. The polypeptide is Venom allergen 5 (Polistes fuscatus (Paper wasp)).